The chain runs to 381 residues: Class E basic helix-loop-helix protein 22 (381 aa).

Disordered stretches follow at residues 30-94 (RLEA…GGGG), 135-154 (RGSVAESSGGEQSPDDDSDG), and 188-242 (HLHG…EQKA). A compositionally biased stretch (gly residues) spans 82–94 (GGGGGSAGSGGGG). Positions 198 to 225 (GGLGGGGGGGSSSGSSGGGGGSGSGSGG) are enriched in gly residues. Residues 242-296 (ALRLNINARERRRMHDLNDALDELRAVIPYAHSPSVRKLSKIATLLLAKNYILMQ) enclose the bHLH domain.

Interacts with PRDM8. Brain-specific, with the highest expression in the cerebellum.

It is found in the nucleus. Functionally, inhibits DNA binding of TCF3/E47 homodimers and TCF3 (E47)/NEUROD1 heterodimers and acts as a strong repressor of Neurod1 and Myod-responsive genes, probably by heterodimerization with class a basic helix-loop-helix factors. Despite the presence of an intact basic domain, does not bind to DNA. In the brain, may function as an area-specific transcription factor that regulates the postmitotic acquisition of area identities and elucidate the genetic hierarchy between progenitors and postmitotic neurons driving neocortical arealization. May be required for the survival of a specific population of inhibitory neurons in the superficial laminae of the spinal cord dorsal horn that may regulate pruritis. Seems to play a crucial role in the retinogenesis, in the specification of amacrine and bipolar subtypes. Forms with PRDM8 a transcriptional repressor complex controlling genes involved in neural development and neuronal differentiation. The chain is Class E basic helix-loop-helix protein 22 (BHLHE22) from Homo sapiens (Human).